Consider the following 445-residue polypeptide: UDP-N-acetylmuramoylalanine--D-glutamate ligase (445 aa).

Gly118–Thr124 is an ATP binding site.

Belongs to the MurCDEF family.

It localises to the cytoplasm. It carries out the reaction UDP-N-acetyl-alpha-D-muramoyl-L-alanine + D-glutamate + ATP = UDP-N-acetyl-alpha-D-muramoyl-L-alanyl-D-glutamate + ADP + phosphate + H(+). The protein operates within cell wall biogenesis; peptidoglycan biosynthesis. Functionally, cell wall formation. Catalyzes the addition of glutamate to the nucleotide precursor UDP-N-acetylmuramoyl-L-alanine (UMA). This chain is UDP-N-acetylmuramoylalanine--D-glutamate ligase, found in Macrococcus caseolyticus (strain JCSC5402) (Macrococcoides caseolyticum).